The primary structure comprises 150 residues: D-aminoacyl-tRNA deacylase (150 aa).

A Gly-cisPro motif, important for rejection of L-amino acids motif is present at residues 138 to 139; it reads GP.

This sequence belongs to the DTD family. As to quaternary structure, homodimer.

The protein localises to the cytoplasm. It carries out the reaction glycyl-tRNA(Ala) + H2O = tRNA(Ala) + glycine + H(+). It catalyses the reaction a D-aminoacyl-tRNA + H2O = a tRNA + a D-alpha-amino acid + H(+). Functionally, an aminoacyl-tRNA editing enzyme that deacylates mischarged D-aminoacyl-tRNAs. Also deacylates mischarged glycyl-tRNA(Ala), protecting cells against glycine mischarging by AlaRS. Acts via tRNA-based rather than protein-based catalysis; rejects L-amino acids rather than detecting D-amino acids in the active site. By recycling D-aminoacyl-tRNA to D-amino acids and free tRNA molecules, this enzyme counteracts the toxicity associated with the formation of D-aminoacyl-tRNA entities in vivo and helps enforce protein L-homochirality. This chain is D-aminoacyl-tRNA deacylase, found in Natranaerobius thermophilus (strain ATCC BAA-1301 / DSM 18059 / JW/NM-WN-LF).